A 973-amino-acid polypeptide reads, in one-letter code: Sodium/calcium exchanger 1 (973 aa).

An N-terminal signal peptide occupies residues 1-35 (MYNMRRLSLSPTFSMGFHLLVTVSLLFSHVDHVIA). Topologically, residues 36-74 (ETEMEGEGNETGECTGSYYCKKGVILPIWEPQDPSFGDK) are extracellular. N-linked (GlcNAc...) asparagine glycosylation occurs at asparagine 44. Residues 75–95 (IARATVYFVAMVYMFLGVSII) form a helical membrane-spanning segment. Topologically, residues 96-136 (ADRFMSSIEVITSQEKEITIKKPNGETTKTTVRIWNETVSN) are cytoplasmic. A helical transmembrane segment spans residues 137 to 157 (LTLMALGSSAPEILLSVIEVC). The stretch at 141 to 181 (ALGSSAPEILLSVIEVCGHNFTAGDLGPSTIVGSAAFNMFI) is one Alpha-1 repeat. At 158 to 170 (GHNFTAGDLGPST) the chain is on the extracellular side. A glycan (N-linked (GlcNAc...) asparagine) is linked at asparagine 160. Residues 171 to 191 (IVGSAAFNMFIIIALCVYVVP) form a helical membrane-spanning segment. Residues 192-204 (DGETRKIKHLRVF) lie on the Cytoplasmic side of the membrane. Residues 205 to 225 (FVTAAWSIFAYTWLYIILSVI) form a helical membrane-spanning segment. The Extracellular segment spans residues 226 to 231 (SPGVVE). Residues 232–252 (VWEGLLTFFFFPICVVFAWVA) form a helical membrane-spanning segment. The Cytoplasmic segment spans residues 253-800 (DRRLLFYKYV…FVPPTEYWNG (548 aa)). A putative calmodulin-binding region region spans residues 254–273 (RRLLFYKYVYKRYRAGKQRG). Residues serine 285 and serine 392 each carry the phosphoserine modification. Calx-beta domains are found at residues 396–496 (VNTE…VHLS) and 527–627 (ATVT…LEIG). Glutamate 420, aspartate 456, aspartate 481, aspartate 482, isoleucine 484, glutamate 486, glutamate 489, aspartate 533, aspartate 534, aspartate 535, glutamate 551, aspartate 587, aspartate 613, glutamate 614, glutamate 615, and glutamate 718 together coordinate Ca(2+). Residues 801–821 (WACFIVSILMIGLLTAFIGDL) traverse the membrane as a helical segment. The Extracellular segment spans residues 822–824 (ASH). The chain crosses the membrane as a helical span at residues 825–845 (FGCTIGLKDSVTAVVFVALGT). One copy of the Alpha-2 repeat lies at 842-878 (ALGTSVPDTFASKVAATQDQYADASIGNVTGSNAVNV). Topologically, residues 846–874 (SVPDTFASKVAATQDQYADASIGNVTGSN) are cytoplasmic. A helical transmembrane segment spans residues 875–895 (AVNVFLGIGVAWSIAAIYHAA). Topologically, residues 896–906 (NGEQFKVSPGT) are extracellular. The chain crosses the membrane as a helical span at residues 907 to 927 (LAFSVTLFTIFAFINVGVLLY). At 928–944 (RRRPEIGGELGGPRTAK) the chain is on the cytoplasmic side. Residues 945 to 965 (LLTSCLFVLLWLLYIFFSSLE) form a helical membrane-spanning segment. At 966 to 973 (AYCHIKGF) the chain is on the extracellular side.

It belongs to the Ca(2+):cation antiporter (CaCA) (TC 2.A.19) family. SLC8 subfamily. Detected primarily in heart and at lower levels in brain. Expressed in cardiac sarcolemma, brain, kidney, liver, pancreas, skeletal muscle, placenta and lung.

It localises to the cell membrane. It catalyses the reaction Ca(2+)(in) + 3 Na(+)(out) = Ca(2+)(out) + 3 Na(+)(in). Its activity is regulated as follows. Activated by micromolar levels of Ca(2+). Mediates the exchange of one Ca(2+) ion against three to four Na(+) ions across the cell membrane, and thereby contributes to the regulation of cytoplasmic Ca(2+) levels and Ca(2+)-dependent cellular processes. Contributes to Ca(2+) transport during excitation-contraction coupling in muscle. In a first phase, voltage-gated channels mediate the rapid increase of cytoplasmic Ca(2+) levels due to release of Ca(2+) stores from the endoplasmic reticulum. SLC8A1 mediates the export of Ca(2+) from the cell during the next phase, so that cytoplasmic Ca(2+) levels rapidly return to baseline. Required for normal embryonic heart development and the onset of heart contractions. This chain is Sodium/calcium exchanger 1 (SLC8A1), found in Homo sapiens (Human).